Reading from the N-terminus, the 286-residue chain is Pyridoxal kinase PdxY (286 aa).

Substrate-binding positions include serine 9 and 44 to 45; that span reads TQ. ATP-binding residues include aspartate 111, glutamate 148, and lysine 181. Aspartate 222 provides a ligand contact to substrate.

This sequence belongs to the pyridoxine kinase family. PdxY subfamily. Homodimer. It depends on Mg(2+) as a cofactor.

The catalysed reaction is pyridoxal + ATP = pyridoxal 5'-phosphate + ADP + H(+). It participates in cofactor metabolism; pyridoxal 5'-phosphate salvage; pyridoxal 5'-phosphate from pyridoxal: step 1/1. Its function is as follows. Pyridoxal kinase involved in the salvage pathway of pyridoxal 5'-phosphate (PLP). Catalyzes the phosphorylation of pyridoxal to PLP. This chain is Pyridoxal kinase PdxY, found in Actinobacillus succinogenes (strain ATCC 55618 / DSM 22257 / CCUG 43843 / 130Z).